A 151-amino-acid chain; its full sequence is Superoxide dismutase [Cu-Zn] 4 (151 aa).

Residues His45, His47, and His62 each coordinate Cu cation. The cysteines at positions 56 and 145 are disulfide-linked. Zn(2+)-binding residues include His62, His70, His79, and Asp82. His120 lines the Cu cation pocket.

It belongs to the Cu-Zn superoxide dismutase family. In terms of assembly, homodimer. Cu cation serves as cofactor. Zn(2+) is required as a cofactor.

It is found in the cytoplasm. The catalysed reaction is 2 superoxide + 2 H(+) = H2O2 + O2. In terms of biological role, destroys radicals which are normally produced within the cells and which are toxic to biological systems. Protects spores from cellular damage caused by UV LIGHT. In Dictyostelium discoideum (Social amoeba), this protein is Superoxide dismutase [Cu-Zn] 4 (sodD).